Consider the following 365-residue polypeptide: Growth-regulating factor 7 (365 aa).

In terms of domain architecture, QLQ spans 59-94 (PFTNAQLKELERQAMIYKYMIASIPVPFDLLVSSPS). The region spanning 107-151 (DLEPGRCRRTDGKKWRCAKEVVSNHKYCEKHLHRGRPRSRKHVEP) is the WRC domain. 2 short sequence motifs (bipartite nuclear localization signal) span residues 112–122 (RCRRTDGKKWR) and 140–147 (RGRPRSRK). Basic residues predominate over residues 137–147 (HLHRGRPRSRK). Disordered stretches follow at residues 137–187 (HLHR…TLEP) and 332–365 (IESY…SSQV). Residues 337 to 365 (LMETPTPSSSPSRVMKKMTSSVSDESSQV) are compositionally biased toward polar residues.

Belongs to the GRF family.

It is found in the nucleus. In terms of biological role, transcription activator that plays a role in the regulation of cell expansion in leaf and cotyledons tissues. Component of a network formed by miR396, the GRFs and their interacting factors (GIFs) acting in the regulation of meristem function, at least partially through the control of cell proliferation. In Arabidopsis thaliana (Mouse-ear cress), this protein is Growth-regulating factor 7 (GRF7).